The sequence spans 248 residues: Small ribosomal subunit protein uS2 (248 aa).

Belongs to the universal ribosomal protein uS2 family.

The polypeptide is Small ribosomal subunit protein uS2 (Herminiimonas arsenicoxydans).